The chain runs to 432 residues: MDHSMSKKLHDEALLHIVGGVNSPSRSNKGVGGGIPVTMERASGAYFYDVDGNKYIDYLAAFGPIITGHAHPHITEAITKAAQNGVLYGTPTKHEITFAKMLKEAIPSLEKVRFTNSGTEAVMTTIRVARAYTGRDKIIKFAGCYHGHFDLVLVEAGSGPSTLGIPDSAGVTKSTAEEVITVPFNDFASFKEALAVWGDQVAAVLVEPIVGNFGMVAPEDGFLEAVNELAHANGSLVIYDEVITAFRFMYGGAQNYLGVIPDLTAMGKIIGGGLPIGAYGGRIDIMEKVAPLGPAYQAGTHAGNPASILSGIACLEVLQEEGLYERFEKYGSMLKDGIEKAALKHGIAVTVNQIVGALTVYFTEDPVTNYAEAGATNGELFGRFFKGMLEEGINLAPSKYEAWFITSAHSEADILETIQAVDTVFGKMVQDN.

An N6-(pyridoxal phosphate)lysine modification is found at K268.

This sequence belongs to the class-III pyridoxal-phosphate-dependent aminotransferase family. HemL subfamily. Homodimer. Pyridoxal 5'-phosphate serves as cofactor.

The protein localises to the cytoplasm. It catalyses the reaction (S)-4-amino-5-oxopentanoate = 5-aminolevulinate. The protein operates within porphyrin-containing compound metabolism; protoporphyrin-IX biosynthesis; 5-aminolevulinate from L-glutamyl-tRNA(Glu): step 2/2. The chain is Glutamate-1-semialdehyde 2,1-aminomutase 2 from Listeria monocytogenes serotype 4b (strain F2365).